A 181-amino-acid polypeptide reads, in one-letter code: Large ribosomal subunit protein uL5c (181 aa).

The protein belongs to the universal ribosomal protein uL5 family. As to quaternary structure, part of the 50S ribosomal subunit; contacts the 5S rRNA.

The protein localises to the plastid. The protein resides in the chloroplast. Functionally, binds 5S rRNA, forms part of the central protuberance of the 50S subunit. This Pyropia yezoensis (Susabi-nori) protein is Large ribosomal subunit protein uL5c (rpl5).